The primary structure comprises 331 residues: tRNA-modifying protein YgfZ (331 aa).

Folate is bound by residues Trp28 and Trp191.

The protein belongs to the tRNA-modifying YgfZ family.

Its subcellular location is the cytoplasm. Its function is as follows. Folate-binding protein involved in regulating the level of ATP-DnaA and in the modification of some tRNAs. It is probably a key factor in regulatory networks that act via tRNA modification, such as initiation of chromosomal replication. The protein is tRNA-modifying protein YgfZ of Edwardsiella ictaluri (strain 93-146).